The sequence spans 376 residues: Queuine tRNA-ribosyltransferase (376 aa).

The Proton acceptor role is filled by D90. Residues D90 to F94, D144, Q193, and G220 each bind substrate. An RNA binding region spans residues G251–D257. Residue D270 is the Nucleophile of the active site. The RNA binding; important for wobble base 34 recognition stretch occupies residues T275–R279. Zn(2+) is bound by residues C308, C310, C313, and H339.

The protein belongs to the queuine tRNA-ribosyltransferase family. Homodimer. Within each dimer, one monomer is responsible for RNA recognition and catalysis, while the other monomer binds to the replacement base PreQ1. It depends on Zn(2+) as a cofactor.

It catalyses the reaction 7-aminomethyl-7-carbaguanine + guanosine(34) in tRNA = 7-aminomethyl-7-carbaguanosine(34) in tRNA + guanine. Its pathway is tRNA modification; tRNA-queuosine biosynthesis. Its function is as follows. Catalyzes the base-exchange of a guanine (G) residue with the queuine precursor 7-aminomethyl-7-deazaguanine (PreQ1) at position 34 (anticodon wobble position) in tRNAs with GU(N) anticodons (tRNA-Asp, -Asn, -His and -Tyr). Catalysis occurs through a double-displacement mechanism. The nucleophile active site attacks the C1' of nucleotide 34 to detach the guanine base from the RNA, forming a covalent enzyme-RNA intermediate. The proton acceptor active site deprotonates the incoming PreQ1, allowing a nucleophilic attack on the C1' of the ribose to form the product. After dissociation, two additional enzymatic reactions on the tRNA convert PreQ1 to queuine (Q), resulting in the hypermodified nucleoside queuosine (7-(((4,5-cis-dihydroxy-2-cyclopenten-1-yl)amino)methyl)-7-deazaguanosine). The chain is Queuine tRNA-ribosyltransferase from Cupriavidus pinatubonensis (strain JMP 134 / LMG 1197) (Cupriavidus necator (strain JMP 134)).